The following is a 386-amino-acid chain: MGCQFSVNSKKVRIFDTTLRDGEQAPGIDLTVEQKVKIARKLAELGVDVIEAGFPAASEGEFIATKKILEEVGDQVEVIGLSRANKQDIDKTIDTGISSIHVFIATSDIHLKYKLKMTREQVLDKIYESVRYAKDHGLIVEYSPEDATRTDKDFLLKAVSTAIEAGADRINIPDTVGVMHPFKFHDLIKDVVSVTKDKIVSVHCHNDFGLATANSIAGVMAGARQVHVTVNGIGERAGNASLEEVVMALKKLLGYEVNIKTYKLYETSRLVSELTGVPVPYFKAIVGENAFGHEAGIHVHGVIENPLTYEPISPEEVGNFRRLALGKHSGIHGLKKLLEEQGIYLNDQELREVLNEIKKLAENGEKVNVDVAKEIAIKVSSKKIKV.

In terms of domain architecture, Pyruvate carboxyltransferase spans 12–265; it reads VRIFDTTLRD…EVNIKTYKLY (254 aa). Positions 21, 203, 205, and 239 each coordinate a divalent metal cation.

Belongs to the alpha-IPM synthase/homocitrate synthase family. Homodimer. The cofactor is a divalent metal cation.

The enzyme catalyses 3-methyl-2-oxobutanoate + acetyl-CoA + H2O = (2S)-2-isopropylmalate + CoA + H(+). The protein operates within amino-acid biosynthesis; L-leucine biosynthesis; L-leucine from 3-methyl-2-oxobutanoate: step 1/4. Its function is as follows. Catalyzes the condensation of the acetyl group of acetyl-CoA with 3-methyl-2-oxobutanoate (2-oxoisovalerate) to form 3-carboxy-3-hydroxy-4-methylpentanoate (2-isopropylmalate). Carries out the first step of the leucine biosynthesis pathway. The chain is 2-isopropylmalate synthase (leuA) from Sulfurisphaera tokodaii (strain DSM 16993 / JCM 10545 / NBRC 100140 / 7) (Sulfolobus tokodaii).